We begin with the raw amino-acid sequence, 383 residues long: Meiotic recombination protein SPO11-2 (383 aa).

One can recognise a Topo IIA-type catalytic domain in the interval 24–167 (LLPHEARARI…LGIMASSRGL (144 aa)). Tyr124 serves as the catalytic O-(5'-phospho-DNA)-tyrosine intermediate. Residues Glu217 and Asp270 each contribute to the Mg(2+) site.

Belongs to the TOP6A family. Heterotetramer of 2 SPO11 (SPO11-1 and/or SPO11-2) and 2 MTOPVIB chains. Interacts with MTOPVIB. May form a heterodimer with SPO11-1. Interacts with PRD1. Does not interact with TOP6B. Mg(2+) serves as cofactor. Very low expression in flowers and shoots.

It is found in the nucleus. It carries out the reaction ATP-dependent breakage, passage and rejoining of double-stranded DNA.. Functionally, component of a topoisomerase 6 complex specifically required for meiotic recombination. Together with MTOPVIB, mediates DNA cleavage that forms the double-strand breaks (DSB) that initiate meiotic recombination. The complex promotes relaxation of negative and positive supercoiled DNA and DNA decatenation through cleavage and ligation cycles. The chain is Meiotic recombination protein SPO11-2 (SPO11-2) from Arabidopsis thaliana (Mouse-ear cress).